Consider the following 80-residue polypeptide: uncharacterized protein (80 aa).

4Fe-4S ferredoxin-type domains follow at residues 21–49 (KIIE…AIKN) and 50–80 (NRVV…LYDA). Cys-30, Cys-33, Cys-36, Cys-40, Cys-60, Cys-63, Cys-66, and Cys-70 together coordinate [4Fe-4S] cluster.

The cofactor is [4Fe-4S] cluster.

This is an uncharacterized protein from Methanocaldococcus jannaschii (strain ATCC 43067 / DSM 2661 / JAL-1 / JCM 10045 / NBRC 100440) (Methanococcus jannaschii).